The chain runs to 199 residues: Putative peroxiredoxin ycf42 (199 aa).

The Thioredoxin domain occupies 8–165 (LRVGQLAPDF…TLRVLQAIQY (158 aa)). C53 acts as the Cysteine sulfenic acid (-SOH) intermediate in catalysis.

It belongs to the peroxiredoxin family. AhpC/Prx1 subfamily. In terms of assembly, homodimer; disulfide-linked, upon oxidation. In terms of processing, the Cys-53-SH group is the primary site of oxidation by H(2)O(2), and the oxidized Cys-53 (probably Cys-SOH) rapidly reacts with Cys-174-SH of the other subunit to form an intermolecular disulfide. This disulfide is subsequently reduced by thioredoxin.

The protein resides in the plastid. The protein localises to the chloroplast. It carries out the reaction a hydroperoxide + [thioredoxin]-dithiol = an alcohol + [thioredoxin]-disulfide + H2O. Functionally, thiol-specific peroxidase that catalyzes the reduction of hydrogen peroxide and organic hydroperoxides to water and alcohols, respectively. Plays a role in cell protection against oxidative stress by detoxifying peroxides. In Pyropia yezoensis (Susabi-nori), this protein is Putative peroxiredoxin ycf42 (ycf42).